The following is a 327-amino-acid chain: Biotin synthase (327 aa).

Residues 52–279 (NAIQRSTLLS…TSWVRLSAGR (228 aa)) enclose the Radical SAM core domain. Positions 67, 71, and 74 each coordinate [4Fe-4S] cluster. The [2Fe-2S] cluster site is built by C111, C142, C202, and R274.

It belongs to the radical SAM superfamily. Biotin synthase family. As to quaternary structure, homodimer. The cofactor is [4Fe-4S] cluster. It depends on [2Fe-2S] cluster as a cofactor.

It carries out the reaction (4R,5S)-dethiobiotin + (sulfur carrier)-SH + 2 reduced [2Fe-2S]-[ferredoxin] + 2 S-adenosyl-L-methionine = (sulfur carrier)-H + biotin + 2 5'-deoxyadenosine + 2 L-methionine + 2 oxidized [2Fe-2S]-[ferredoxin]. It functions in the pathway cofactor biosynthesis; biotin biosynthesis; biotin from 7,8-diaminononanoate: step 2/2. In terms of biological role, catalyzes the conversion of dethiobiotin (DTB) to biotin by the insertion of a sulfur atom into dethiobiotin via a radical-based mechanism. This is Biotin synthase from Dechloromonas aromatica (strain RCB).